The sequence spans 892 residues: Histone deacetylase 4 (892 aa).

The interval Asn-145–Ser-225 is disordered. Polar residues-rich tracts occupy residues Ser-171 to Leu-192 and Glu-208 to His-222. Residues Ser-481–Asp-822 form a histone deacetylase region. His-628 is a catalytic residue.

The protein belongs to the histone deacetylase family. HD type 2 subfamily.

The protein resides in the nucleus. The catalysed reaction is N(6)-acetyl-L-lysyl-[histone] + H2O = L-lysyl-[histone] + acetate. Its function is as follows. Responsible for the deacetylation of lysine residues on the N-terminal part of the core histones (H2A, H2B, H3 and H4). Histone deacetylation gives a tag for epigenetic repression and plays an important role in transcriptional regulation, cell cycle progression and developmental events. Histone deacetylases act via the formation of large multiprotein complexes. This Caenorhabditis briggsae protein is Histone deacetylase 4 (hda-4).